Consider the following 368-residue polypeptide: Propane 2-monooxygenase, hydroxylase component small subunit (368 aa).

Residues 1-17 (MSAPEKPRERSFPKIEF) show a composition bias toward basic and acidic residues. The segment at 1 to 32 (MSAPEKPRERSFPKIEFTDSEAGAKEFPSSKS) is disordered.

The protein belongs to the TmoE/XamoE family. As to quaternary structure, the propane 2-monooxygenase multicomponent enzyme system is composed of an electron transfer component and a monooxygenase component interacting with the effector protein MimD. The electron transfer component is composed of a reductase (MimB), and the monooxygenase component is formed by a large subunit (MimA) and a small subunit (MimC). Requires the presence of the chaperonin-like protein MimG to ensure a productive folding, resulting of a soluble MimC, which leads to the active form of MimABCD.

It catalyses the reaction propane + NADH + O2 + H(+) = propan-2-ol + NAD(+) + H2O. The catalysed reaction is acetone + NADH + O2 + H(+) = hydroxyacetone + NAD(+) + H2O. The enzyme catalyses butan-2-one + NADH + O2 + H(+) = 1-hydroxy-2-butanone + NAD(+) + H2O. It carries out the reaction phenol + NADH + O2 + H(+) = hydroquinone + NAD(+) + H2O. Functionally, component of the propane 2-monooxygenase multicomponent enzyme system which is involved in the degradation of propane via the O2-dependent hydroxylation of propane. Also involved in the degradation of acetone via the O2-dependent hydroxylation of acetone. Also able to catalyze the oxidation of phenol, methylethylketone (2-butanone), 1-propanol and 2-propanol. This Mycolicibacterium smegmatis (strain ATCC 700084 / mc(2)155) (Mycobacterium smegmatis) protein is Propane 2-monooxygenase, hydroxylase component small subunit.